Reading from the N-terminus, the 2194-residue chain is Genome polyprotein (2194 aa).

Glycine 2 carries the N-myristoyl glycine; by host lipid modification. Over 2 to 1504 (GAQVSTQKTG…HVSRAFICLQ (1503 aa)) the chain is Cytoplasmic. The interval 566-582 (LYQNDPEGALNKAVGRV) is amphipathic alpha-helix. Catalysis depends on for protease 2A activity residues histidine 881 and aspartate 899. Zn(2+)-binding residues include cysteine 916 and cysteine 918. Cysteine 970 acts as the For protease 2A activity in catalysis. Residues cysteine 976 and histidine 978 each coordinate Zn(2+). The tract at residues 1110–1182 (NNNWLKKFTE…EQSAPSQSDQ (73 aa)) is membrane-binding. The oligomerization stretch occupies residues 1110 to 1248 (NNNWLKKFTE…SPGAGKSVAT (139 aa)). The interval 1131-1135 (AIKIQ) is RNA-binding. The region spanning 1214-1370 (EKKMSNYIQF…SMYSQNGKIN (157 aa)) is the SF3 helicase domain. Zn(2+)-binding residues include cysteine 1378, cysteine 1390, and cysteine 1395. Residues 1378–1395 (CDEECCPVNFKRCCPLVC) form a C4-type; degenerate zinc finger. The interval 1422–1429 (EYNHRHSV) is RNA-binding. Positions 1433–1438 (LEALFQ) are oligomerization. An intramembrane segment occupies 1505–1520 (ALTTFVSVAGIIYIIY). At 1521–2194 (KLFAGFQGAY…TLRRKWLDSF (674 aa)) the chain is on the cytoplasmic side. O-(5'-phospho-RNA)-tyrosine is present on tyrosine 1530. A Peptidase C3 domain is found at 1550–1728 (GPAFEFAVAM…FSAALLRHYF (179 aa)). Active-site for protease 3C activity residues include histidine 1589, glutamate 1620, and cysteine 1696. Positions 1959–2075 (GHLIAFDYSG…SYPHPIDASL (117 aa)) constitute a RdRp catalytic domain. The Mg(2+) site is built by aspartate 1965 and aspartate 2061.

Belongs to the picornaviruses polyprotein family. Interacts with capsid protein VP1 and capsid protein VP3 to form heterotrimeric protomers. In terms of assembly, interacts with capsid protein VP0, and capsid protein VP3 to form heterotrimeric protomers. Five protomers subsequently associate to form pentamers which serve as building blocks for the capsid. Interacts with capsid protein VP2, capsid protein VP3 and capsid protein VP4 following cleavage of capsid protein VP0. As to quaternary structure, interacts with capsid protein VP1 and capsid protein VP3 in the mature capsid. Interacts with capsid protein VP0 and capsid protein VP1 to form heterotrimeric protomers. Five protomers subsequently associate to form pentamers which serve as building blocks for the capsid. Interacts with capsid protein VP4 in the mature capsid. Interacts with protein 2C; this interaction may be important for virion morphogenesis. In terms of assembly, interacts with capsid protein VP1 and capsid protein VP3. As to quaternary structure, homodimer. Homohexamer; forms a hexameric ring structure with 6-fold symmetry characteristic of AAA+ ATPases. Interacts (via N-terminus) with host RTN3 (via reticulon domain); this interaction is important for viral replication. Interacts with capsid protein VP3; this interaction may be important for virion morphogenesis. In terms of assembly, interacts with protein 3CD. As to quaternary structure, homodimer. Interacts with host GBF1. Interacts (via GOLD domain) with host ACBD3 (via GOLD domain); this interaction allows the formation of a viral protein 3A/ACBD3 heterotetramer with a 2:2 stoichiometry, which will stimulate the recruitment of host PI4KB in order to synthesize PI4P at the viral RNA replication sites. Interacts with RNA-directed RNA polymerase. In terms of assembly, interacts with protein 3AB and with RNA-directed RNA polymerase. As to quaternary structure, interacts with Viral protein genome-linked and with protein 3CD. Mg(2+) serves as cofactor. In terms of processing, specific enzymatic cleavages in vivo by the viral proteases yield processing intermediates and the mature proteins. Myristoylation is required for the formation of pentamers during virus assembly. Further assembly of 12 pentamers and a molecule of genomic RNA generates the provirion. Post-translationally, during virion maturation, immature virions are rendered infectious following cleavage of VP0 into VP4 and VP2. This maturation seems to be an autocatalytic event triggered by the presence of RNA in the capsid and it is followed by a conformational change infectious virion. In terms of processing, myristoylation is required during RNA encapsidation and formation of the mature virus particle. VPg is uridylylated by the polymerase into VPg-pUpU. This acts as a nucleotide-peptide primer for the genomic RNA replication.

It localises to the virion. Its subcellular location is the host cytoplasm. The protein localises to the host cytoplasmic vesicle membrane. The protein resides in the host nucleus. The enzyme catalyses a ribonucleoside 5'-triphosphate + H2O = a ribonucleoside 5'-diphosphate + phosphate + H(+). It carries out the reaction Selective cleavage of Tyr-|-Gly bond in the picornavirus polyprotein.. It catalyses the reaction RNA(n) + a ribonucleoside 5'-triphosphate = RNA(n+1) + diphosphate. The catalysed reaction is Selective cleavage of Gln-|-Gly bond in the poliovirus polyprotein. In other picornavirus reactions Glu may be substituted for Gln, and Ser or Thr for Gly.. Its activity is regulated as follows. Replication or transcription is subject to high level of random mutations by the nucleotide analog ribavirin. Forms an icosahedral capsid of pseudo T=3 symmetry with capsid proteins VP2 and VP3. The capsid is 300 Angstroms in diameter, composed of 60 copies of each capsid protein and enclosing the viral positive strand RNA genome. Capsid protein VP1 mainly forms the vertices of the capsid. Capsid protein VP1 interacts with host cell receptor to provide virion attachment to target host cells. This attachment induces virion internalization. Tyrosine kinases are probably involved in the entry process. After binding to its receptor, the capsid undergoes conformational changes. Capsid protein VP1 N-terminus (that contains an amphipathic alpha-helix) and capsid protein VP4 are externalized. Together, they shape a pore in the host membrane through which viral genome is translocated to host cell cytoplasm. Functionally, forms an icosahedral capsid of pseudo T=3 symmetry with capsid proteins VP2 and VP3. The capsid is 300 Angstroms in diameter, composed of 60 copies of each capsid protein and enclosing the viral positive strand RNA genome. Its function is as follows. Lies on the inner surface of the capsid shell. After binding to the host receptor, the capsid undergoes conformational changes. Capsid protein VP4 is released, Capsid protein VP1 N-terminus is externalized, and together, they shape a pore in the host membrane through which the viral genome is translocated into the host cell cytoplasm. In terms of biological role, component of immature procapsids, which is cleaved into capsid proteins VP4 and VP2 after maturation. Allows the capsid to remain inactive before the maturation step. Cysteine protease that cleaves viral polyprotein and specific host proteins. It is responsible for the autocatalytic cleavage between the P1 and P2 regions, which is the first cleavage occurring in the polyprotein. Also cleaves the host translation initiation factor EIF4G1, in order to shut down the capped cellular mRNA translation. Inhibits the host nucleus-cytoplasm protein and RNA trafficking by cleaving host members of the nuclear pores. Counteracts stress granule formation probably by antagonizing its assembly or promoting its dissassembly. Functionally, plays an essential role in the virus replication cycle by acting as a viroporin. Creates a pore in the host endoplasmic reticulum and as a consequence releases Ca2+ in the cytoplasm of infected cell. In turn, high levels of cytoplasmic calcium may trigger membrane trafficking and transport of viral ER-associated proteins to viroplasms, sites of viral genome replication. Its function is as follows. Induces and associates with structural rearrangements of intracellular membranes. Displays RNA-binding, nucleotide binding and NTPase activities. May play a role in virion morphogenesis and viral RNA encapsidation by interacting with the capsid protein VP3. In terms of biological role, localizes the viral replication complex to the surface of membranous vesicles. Together with protein 3CD binds the Cis-Active RNA Element (CRE) which is involved in RNA synthesis initiation. Acts as a cofactor to stimulate the activity of 3D polymerase, maybe through a nucleid acid chaperone activity. Localizes the viral replication complex to the surface of membranous vesicles. It inhibits host cell endoplasmic reticulum-to-Golgi apparatus transport and causes the disassembly of the Golgi complex, possibly through GBF1 interaction. This would result in depletion of MHC, trail receptors and IFN receptors at the host cell surface. Plays an essential role in viral RNA replication by recruiting ACBD3 and PI4KB at the viral replication sites, thereby allowing the formation of the rearranged membranous structures where viral replication takes place. Functionally, acts as a primer for viral RNA replication and remains covalently bound to viral genomic RNA. VPg is uridylylated prior to priming replication into VPg-pUpU. The oriI viral genomic sequence may act as a template for this. The VPg-pUpU is then used as primer on the genomic RNA poly(A) by the RNA-dependent RNA polymerase to replicate the viral genome. During genome replication, the VPg-RNA linkage is removed by the host TDP2, thereby accelerating replication. During the late stage of the replication cycle, host TDP2 is excluded from sites of viral RNA synthesis and encapsidation, allowing for the generation of progeny virions. Its function is as follows. Involved in the viral replication complex and viral polypeptide maturation. It exhibits protease activity with a specificity and catalytic efficiency that is different from protease 3C. Protein 3CD lacks polymerase activity. Protein 3CD binds to the 5'UTR of the viral genome. In terms of biological role, replicates the viral genomic RNA on the surface of intracellular membranes. May form linear arrays of subunits that propagate along a strong head-to-tail interaction called interface-I. Covalently attaches UMP to a tyrosine of VPg, which is used to prime RNA synthesis. The positive stranded RNA genome is first replicated at virus induced membranous vesicles, creating a dsRNA genomic replication form. This dsRNA is then used as template to synthesize positive stranded RNA genomes. ss(+)RNA genomes are either translated, replicated or encapsidated. Major viral protease that mediates proteolytic processing of the polyprotein. Cleaves host EIF5B, contributing to host translation shutoff. Also cleaves host PABPC1, contributing to host translation shutoff. Cleaves host NLRP1, triggers host N-glycine-mediated degradation of the autoinhibitory NLRP1 N-terminal fragment. The sequence is that of Genome polyprotein from Homo sapiens (Human).